A 128-amino-acid polypeptide reads, in one-letter code: Hemoglobin subunit beta-1 (128 aa).

The Globin domain occupies 2–128 (HWTAEEKALV…VVDALSKGYH (127 aa)). Heme b-binding residues include H51 and H74.

The protein belongs to the globin family. As to quaternary structure, hb 1 is a heterotetramer of two alpha and two beta-1 chains. Red blood cells (at protein level).

In terms of biological role, involved in oxygen transport from gills to the various peripheral tissues. The polypeptide is Hemoglobin subunit beta-1 (Somniosus microcephalus (Greenland sleeper shark)).